Consider the following 88-residue polypeptide: Meiosis expressed gene 1 protein homolog (88 aa).

This sequence belongs to the MEIG1 family. Interacts with PACRG. Interacts with MORN3.

Functionally, essential for spermiogenesis. The chain is Meiosis expressed gene 1 protein homolog from Homo sapiens (Human).